Here is a 142-residue protein sequence, read N- to C-terminus: Small ribosomal subunit protein bS6 (142 aa).

A compositionally biased stretch (basic and acidic residues) spans 110 to 133; sequence NKKPSHAKEKHEKTEHTHSHHAEE. The disordered stretch occupies residues 110-142; sequence NKKPSHAKEKHEKTEHTHSHHAEEAESVGSHSE.

The protein belongs to the bacterial ribosomal protein bS6 family.

Binds together with bS18 to 16S ribosomal RNA. This is Small ribosomal subunit protein bS6 from Helicobacter pylori (strain P12).